Reading from the N-terminus, the 680-residue chain is Tumor protein 63 (680 aa).

Residues 1 to 107 are transcription activation; the sequence is MNFETSRCAT…MQDSDLSDPM (107 aa). A compositionally biased stretch (polar residues) spans 122-157; it reads QQIQNGSSSTSPYNTDHAQNSVTAPSPYAQPSSTFD. The interval 122–171 is disordered; that stretch reads QQIQNGSSSTSPYNTDHAQNSVTAPSPYAQPSSTFDALSPSPAIPSNTDY. The DNA-binding element occupies 170-362; that stretch reads DYPGPHSFDV…KADEDSIRKQ (193 aa). Cysteine 244, histidine 247, cysteine 308, and cysteine 312 together coordinate Zn(2+). Positions 351–360 are enriched in basic and acidic residues; the sequence is DRKADEDSIR. 2 disordered regions span residues 351 to 393 and 436 to 472; these read DRKA…IKKR and RQQQ…MNSM. Residues 352–388 form an interaction with HIPK2 region; it reads RKADEDSIRKQQVSDSAKNGDGTKRPFRQNTHGIQMT. Polar residues predominate over residues 379-389; sequence RQNTHGIQMTS. Positions 394 to 443 are oligomerization; that stretch reads RSPDDELLYLPVRGRETYEMLLKIKESLELMQYLPQHTIETYRQQQQQQH. A compositionally biased stretch (low complexity) spans 437 to 463; that stretch reads QQQQQQHQHLLQKQTSMQSQSSYGNSS. The 67-residue stretch at 541–607 folds into the SAM domain; sequence PPYPTDCSIV…WKGILDHRQL (67 aa). The segment at 610–680 is transactivation inhibition; that stretch reads FSSPPHLLRT…KQQRIKEEGE (71 aa). A Glycyl lysine isopeptide (Lys-Gly) (interchain with G-Cter in SUMO) cross-link involves residue lysine 676.

It belongs to the p53 family. As to quaternary structure, binds DNA as a homotetramer. Isoform composition of the tetramer may determine transactivation activity. Interacts with HIPK2. Interacts with SSRP1, leading to stimulate coactivator activity. Interacts with WWP1. Interacts with PDS5A. Interacts (via activation domain) with NOC2L. The cofactor is Zn(2+). Post-translationally, may be sumoylated. Ubiquitinated. Polyubiquitination involves WWP1 and leads to proteasomal degradation of this protein. As to expression, widely expressed, notably in thymus, prostate, placenta, and skeletal muscle, although the precise isoform varies according to tissue type. Progenitor cell layers of skin, breast and prostate express high levels of DeltaN-type isoforms.

The protein localises to the nucleus. Acts as a sequence specific DNA binding transcriptional activator or repressor. The isoforms contain a varying set of transactivation and auto-regulating transactivation inhibiting domains thus showing an isoform specific activity. May be required in conjunction with TP73/p73 for initiation of p53/TP53 dependent apoptosis in response to genotoxic insults and the presence of activated oncogenes. Involved in Notch signaling by probably inducing JAG1 and JAG2. Activates RIPK4 transcription. Plays a role in the regulation of epithelial morphogenesis. The ratio of DeltaN-type and TA*-type isoforms may govern the maintenance of epithelial stem cell compartments and regulate the initiation of epithelial stratification from the undifferentiated embryonal ectoderm. Required for limb formation from the apical ectodermal ridge. Activates transcription of the p21 promoter. The chain is Tumor protein 63 (Tp63) from Rattus norvegicus (Rat).